A 1010-amino-acid polypeptide reads, in one-letter code: Protein translocase subunit SecA (1010 aa).

ATP-binding positions include Q86, 104 to 108, and D535; that span reads GEGKT. A compositionally biased stretch (low complexity) spans 893-904; that stretch reads QAGAADGNAKGA. The disordered stretch occupies residues 893–916; sequence QAGAADGNAKGARTVRHSVRLPGR. C920, C922, C931, and H932 together coordinate Zn(2+). The span at 950-981 shows a compositional bias: low complexity; sequence QHAAVAADTPAQPAPQATATRPPTSQVPRGRA. A disordered region spans residues 950 to 1010; the sequence is QHAAVAADTP…RGKGASARKK (61 aa).

Belongs to the SecA family. In terms of assembly, monomer and homodimer. Part of the essential Sec protein translocation apparatus which comprises SecA, SecYEG and auxiliary proteins SecDF. Other proteins may also be involved. Zn(2+) serves as cofactor.

It is found in the cell membrane. It localises to the cytoplasm. It carries out the reaction ATP + H2O + cellular proteinSide 1 = ADP + phosphate + cellular proteinSide 2.. Functionally, part of the Sec protein translocase complex. Interacts with the SecYEG preprotein conducting channel. Has a central role in coupling the hydrolysis of ATP to the transfer of proteins into and across the cell membrane, serving as an ATP-driven molecular motor driving the stepwise translocation of polypeptide chains across the membrane. This is Protein translocase subunit SecA from Roseiflexus sp. (strain RS-1).